The following is a 147-amino-acid chain: Austinoid biosynthesis cluster protein H (147 aa).

This sequence belongs to the trt14 isomerase family. In terms of assembly, homodimer.

Its pathway is secondary metabolite biosynthesis; terpenoid biosynthesis. Part of the gene cluster that mediates the biosynthesis of calidodehydroaustin, a fungal meroterpenoid. The first step of the pathway is the synthesis of 3,5-dimethylorsellinic acid by the polyketide synthase ausA. 3,5-dimethylorsellinic acid is then prenylated by the polyprenyl transferase ausN. Further epoxidation by the FAD-dependent monooxygenase ausM and cyclization by the probable terpene cyclase ausL lead to the formation of protoaustinoid A. Protoaustinoid A is then oxidized to spiro-lactone preaustinoid A3 by the combined action of the FAD-binding monooxygenases ausB and ausC, and the dioxygenase ausE. Acid-catalyzed keto-rearrangement and ring contraction of the tetraketide portion of preaustinoid A3 by ausJ lead to the formation of preaustinoid A4. The aldo-keto reductase ausK, with the help of ausH, is involved in the next step by transforming preaustinoid A4 into isoaustinone which is in turn hydroxylated by the P450 monooxygenase ausI to form austinolide. The cytochrome P450 monooxygenase ausG modifies austinolide to austinol. Austinol is further acetylated to austin by the O-acetyltransferase ausP, which spontaneously changes to dehydroaustin. The cytochrome P450 monooxygenase ausR then converts dehydroaustin is into 7-dehydrodehydroaustin. The hydroxylation catalyzed by ausR permits the O-acetyltransferase ausQ to add an additional acetyl group to the molecule, leading to the formation of acetoxydehydroaustin. The short chain dehydrogenase ausT catalyzes the reduction of the double bond present between carbon atoms 1 and 2 to convert 7-dehydrodehydroaustin into 1,2-dihydro-7-hydroxydehydroaustin. AusQ catalyzes not only an acetylation reaction but also the addition of the PKS ausV diketide product to 1,2-dihydro-7-hydroxydehydroaustin, forming precalidodehydroaustin. Finally, the iron/alpha-ketoglutarate-dependent dioxygenase converts precalidodehydroaustin into calidodehydroaustin. The sequence is that of Austinoid biosynthesis cluster protein H from Aspergillus calidoustus.